Here is a 407-residue protein sequence, read N- to C-terminus: Peptidase T (407 aa).

Zn(2+) is bound at residue H81. The active site involves D83. D142 contributes to the Zn(2+) binding site. E176 acts as the Proton acceptor in catalysis. E177, D199, and H381 together coordinate Zn(2+).

It belongs to the peptidase M20B family. Zn(2+) is required as a cofactor.

The protein localises to the cytoplasm. The catalysed reaction is Release of the N-terminal residue from a tripeptide.. Cleaves the N-terminal amino acid of tripeptides. The polypeptide is Peptidase T (Streptococcus pneumoniae (strain P1031)).